Here is a 308-residue protein sequence, read N- to C-terminus: HPr kinase/phosphorylase (308 aa).

Residues His136 and Lys157 contribute to the active site. 151–158 is an ATP binding site; that stretch reads GESGIGKS. Ser158 serves as a coordination point for Mg(2+). Asp175 serves as the catalytic Proton acceptor; for phosphorylation activity. Proton donor; for dephosphorylation activity. Residues 198–207 are important for the catalytic mechanism of both phosphorylation and dephosphorylation; it reads IEVRGMGIID. Glu199 lines the Mg(2+) pocket. The active site involves Arg240. An important for the catalytic mechanism of dephosphorylation region spans residues 261–266; sequence PIRPGR.

This sequence belongs to the HPrK/P family. As to quaternary structure, homohexamer. Mg(2+) serves as cofactor.

The enzyme catalyses [HPr protein]-L-serine + ATP = [HPr protein]-O-phospho-L-serine + ADP + H(+). It carries out the reaction [HPr protein]-O-phospho-L-serine + phosphate + H(+) = [HPr protein]-L-serine + diphosphate. In terms of biological role, catalyzes the ATP- as well as the pyrophosphate-dependent phosphorylation of a specific serine residue in HPr, a phosphocarrier protein of the phosphoenolpyruvate-dependent sugar phosphotransferase system (PTS). HprK/P also catalyzes the pyrophosphate-producing, inorganic phosphate-dependent dephosphorylation (phosphorolysis) of seryl-phosphorylated HPr (P-Ser-HPr). The two antagonistic activities of HprK/P are regulated by several intracellular metabolites, which change their concentration in response to the absence or presence of rapidly metabolisable carbon sources (glucose, fructose, etc.) in the growth medium. Therefore, by controlling the phosphorylation state of HPr, HPrK/P is a sensor enzyme that plays a major role in the regulation of carbon metabolism and sugar transport: it mediates carbon catabolite repression (CCR), and regulates PTS-catalyzed carbohydrate uptake and inducer exclusion. The protein is HPr kinase/phosphorylase of Clostridium kluyveri (strain NBRC 12016).